The chain runs to 146 residues: Hemoglobin subunit beta (146 aa).

Val-1 carries the N-acetylvaline modification. In terms of domain architecture, Globin spans 2–146 (HLSGGEKSAV…VAHALGHKYH (145 aa)). Position 12 is a phosphothreonine (Thr-12). The residue at position 59 (Lys-59) is an N6-acetyllysine. Position 63 (His-63) interacts with heme b. Lys-82 bears the N6-acetyllysine mark. Heme b is bound at residue His-92. An S-nitrosocysteine modification is found at Cys-93. Lys-144 is modified (N6-acetyllysine).

This sequence belongs to the globin family. In terms of assembly, heterotetramer of two alpha chains and two beta chains. Red blood cells.

Involved in oxygen transport from the lung to the various peripheral tissues. The chain is Hemoglobin subunit beta (HBB) from Ornithorhynchus anatinus (Duckbill platypus).